A 112-amino-acid chain; its full sequence is Cytochrome c (112 aa).

Heme c is bound by residues cysteine 23, cysteine 26, and histidine 27. Lysine 81 bears the N6,N6,N6-trimethyllysine mark. Residue methionine 89 participates in heme c binding. At lysine 95 the chain carries N6,N6,N6-trimethyllysine.

The protein belongs to the cytochrome c family. Binds 1 heme c group covalently per subunit.

It localises to the mitochondrion intermembrane space. In terms of biological role, electron carrier protein. The oxidized form of the cytochrome c heme group can accept an electron from the heme group of the cytochrome c1 subunit of cytochrome reductase. Cytochrome c then transfers this electron to the cytochrome oxidase complex, the final protein carrier in the mitochondrial electron-transport chain. The chain is Cytochrome c (CC-1) from Arabidopsis thaliana (Mouse-ear cress).